The chain runs to 240 residues: Lipoprotein signal peptidase (240 aa).

The next 4 membrane-spanning stretches (helical) occupy residues 38 to 58 (LIWK…TSFL), 73 to 93 (LIPG…FGTL), 98 to 118 (PSLV…VLLF), and 120 to 140 (SNYL…SNII). Active-site residues include aspartate 162 and aspartate 179. A helical membrane pass occupies residues 177–197 (FPDTFVIIGMIFVGIQIIISF).

It belongs to the peptidase A8 family.

The protein resides in the cell membrane. The catalysed reaction is Release of signal peptides from bacterial membrane prolipoproteins. Hydrolyzes -Xaa-Yaa-Zaa-|-(S,diacylglyceryl)Cys-, in which Xaa is hydrophobic (preferably Leu), and Yaa (Ala or Ser) and Zaa (Gly or Ala) have small, neutral side chains.. Its pathway is protein modification; lipoprotein biosynthesis (signal peptide cleavage). In terms of biological role, this protein specifically catalyzes the removal of signal peptides from prolipoproteins. This chain is Lipoprotein signal peptidase, found in Malacoplasma penetrans (strain HF-2) (Mycoplasma penetrans).